Consider the following 350-residue polypeptide: Inhibin beta E chain (350 aa).

An N-terminal signal peptide occupies residues 1-19; that stretch reads MRLPDVQLWLVLLWALVRA. Residues 20 to 236 constitute a propeptide that is removed on maturation; it reads QGTGSVCPSC…EPGAGRARRR (217 aa). N-linked (GlcNAc...) asparagine glycosylation occurs at Asn198. Disulfide bonds link Cys240/Cys248, Cys247/Cys315, Cys276/Cys347, and Cys280/Cys349.

Belongs to the TGF-beta family. In terms of assembly, homodimeric or heterodimeric through association with alpha and beta subunits, linked by one or more disulfide bonds. Inhibins are heterodimers of one alpha and one beta subunit. Activins are homo- or heterodimers of beta subunits only.

Its subcellular location is the secreted. In terms of biological role, inhibins and activins inhibit and activate, respectively, the secretion of follitropin by the pituitary gland. Inhibins/activins are involved in regulating a number of diverse functions such as hypothalamic and pituitary hormone secretion, gonadal hormone secretion, germ cell development and maturation, erythroid differentiation, insulin secretion, nerve cell survival, embryonic axial development or bone growth, depending on their subunit composition. Inhibins appear to oppose the functions of activins. Activin E is a homodimer of INHBE secreted by the liver that plays a crucial role in regulating metabolic homeostasis particularly in lipid metabolism and energy homeostasis. Plays a central role in the regulation of adipose tissue lipolysis by preventing the influx of fatty acids from adipose tissue into the liver. Mechanistically, signals via ACVR1C to activate SMAD2/3 signaling, suppressing PPARG target genes in adipose tissue, thereby reducing liver lipid content and improving glycemic control. Induces beige adipocyte formation and thermogenesis in response to cold exposure. In Homo sapiens (Human), this protein is Inhibin beta E chain (INHBE).